The primary structure comprises 192 residues: Crossover junction endodeoxyribonuclease RuvC (192 aa).

Catalysis depends on residues D20, E80, and D153. Mg(2+) contacts are provided by D20, E80, and D153.

This sequence belongs to the RuvC family. As to quaternary structure, homodimer which binds Holliday junction (HJ) DNA. The HJ becomes 2-fold symmetrical on binding to RuvC with unstacked arms; it has a different conformation from HJ DNA in complex with RuvA. In the full resolvosome a probable DNA-RuvA(4)-RuvB(12)-RuvC(2) complex forms which resolves the HJ. The cofactor is Mg(2+).

Its subcellular location is the cytoplasm. It catalyses the reaction Endonucleolytic cleavage at a junction such as a reciprocal single-stranded crossover between two homologous DNA duplexes (Holliday junction).. The RuvA-RuvB-RuvC complex processes Holliday junction (HJ) DNA during genetic recombination and DNA repair. Endonuclease that resolves HJ intermediates. Cleaves cruciform DNA by making single-stranded nicks across the HJ at symmetrical positions within the homologous arms, yielding a 5'-phosphate and a 3'-hydroxyl group; requires a central core of homology in the junction. The consensus cleavage sequence is 5'-(A/T)TT(C/G)-3'. Cleavage occurs on the 3'-side of the TT dinucleotide at the point of strand exchange. HJ branch migration catalyzed by RuvA-RuvB allows RuvC to scan DNA until it finds its consensus sequence, where it cleaves and resolves the cruciform DNA. The protein is Crossover junction endodeoxyribonuclease RuvC of Christiangramia forsetii (strain DSM 17595 / CGMCC 1.15422 / KT0803) (Gramella forsetii).